Reading from the N-terminus, the 682-residue chain is Protein asunder (682 aa).

Residues 517-570 (NGARLKLSKAKDQYRLLYRELEQLIHLNATTVHHKNLLESLQSLRAAYGEAKSE) are a coiled coil. The segment covering 571-583 (PNSSLLRSYTESP) has biased composition (polar residues). A disordered region spans residues 571-612 (PNSSLLRSYTESPHSPERLEPIPSGGSSGSNSNSLLKASKRR). Residues 606-612 (LKASKRR) carry the Nuclear localization signal (NLS) motif.

The protein belongs to the Integrator subunit 13 family. As to quaternary structure, belongs to the multiprotein complex Integrator, at least composed of IntS1, IntS2, IntS3, IntS4, omd/IntS5, IntS6, defl/IntS7, IntS8, IntS9, IntS10, IntS11, IntS12, asun/IntS13, IntS14 and IntS15. The core complex associates with protein phosphatase 2A subunits mts/PP2A and Pp2A-29B, to form the Integrator-PP2A (INTAC) complex. Post-translationally, phosphorylated.

The protein resides in the nucleus. The protein localises to the cytoplasm. Its subcellular location is the perinuclear region. Functionally, component of the integrator complex, a multiprotein complex that terminates RNA polymerase II (Pol II) transcription in the promoter-proximal region of genes. The integrator complex provides a quality checkpoint during transcription elongation by driving premature transcription termination of transcripts that are unfavorably configured for transcriptional elongation: the complex terminates transcription by (1) catalyzing dephosphorylation of the C-terminal domain (CTD) of Pol II subunit Polr2A/Rbp1 and Spt5, and (2) degrading the exiting nascent RNA transcript via endonuclease activity. The integrator complex is also involved in the 3'-end processing of the U7 snRNA, and also the spliceosomal snRNAs U1, U2, U4 and U5. This chain is Protein asunder (asun), found in Drosophila ananassae (Fruit fly).